Consider the following 193-residue polypeptide: Achaete-scute homolog 2 (193 aa).

3 disordered regions span residues 1-27, 37-56, and 118-177; these read MDGG…RRPA, RRRP…ARRN, and GGLR…GALS. The 53-residue stretch at 50 to 102 folds into the bHLH domain; it reads AAVARRNERERNRVKLVNLGFQALRQHVPHGGASKKLSKVETLRSAVEYIRAL. Residues 140–150 are compositionally biased toward low complexity; it reads AASPSRASSSP.

In terms of assembly, efficient DNA binding requires dimerization with another basic helix-loop-helix (bHLH) protein. Forms heterodimers with bHLH transcription factor TCF3. May not heterodimerise with bHLH protein HAND1. Expressed in the placenta at a stage between the first and second trimesters and when it matures, at about 32-36 weeks. Expressed in the extravillous trophoblasts, the intermediate trophoblasts, and at lower levels in the cytotrophoblasts and stroma of chorionic villi of the developing placenta. Expressed in follicular T-helper (Tfh) cells.

It localises to the nucleus. In terms of biological role, transcription factor. Binds to E-box motifs 5'-CANNTG-3' in the regulatory elements of target genes, probably as a heterodimer with another basic helix-loop-helix (bHLH) protein such as the transcription factor TCF3. May bind both open and closed chromatin, acting as a pioneer transcription factor to allow other factors to bind and activate lineage-specific genes. Required during post-implantation development for the generation of some differentiated trophoblast cell types. Transcriptional activity of ASCL2 may be antagonised in a subset of trophoblast cells by bHLH transcription factor HAND1, perhaps by competing for dimerization with other bHLH proteins. Involved in differentiation and function of follicular T-helper (Tfh) cells, thereby playing a role in germinal center responses; probably modulates expression of genes involved in Tfh cell function, such as BCL6. May also act as a suppressor of Th1-, Th2- and Th17-cell differentiation. Induces the formation of stem cells in intestinal crypts in vitro, synergistically activating transcription of target genes, such as SOX9, together with TCF4/beta-catenin. May form a bistable transcriptional switch, controlling expression of its own gene together with Wnt/R-spondin signaling, and thereby maintaining stem cell characteristics. Modulates expression of target genes, including perhaps down-regulating EGR1/Krox24 and chemokine CXCL10/Mob-1 and up-regulating CXCR4 and CDKN1C/p57kip2, in Schwann cells. May play a role in reducing proliferation of Schwann cells, perhaps acting via modulation of expression of CDKN1C. May be dispensable for blastocyst formation and later embryonic function. May be involved in the determination of neuronal precursors. In Homo sapiens (Human), this protein is Achaete-scute homolog 2 (ASCL2).